Consider the following 131-residue polypeptide: Profilin-8 (131 aa).

Cysteine 13 and cysteine 115 form a disulfide bridge. The Involved in PIP2 interaction motif lies at 81-97 (AVIRGKKGSGGITVKKT). A Phosphothreonine modification is found at threonine 111.

It belongs to the profilin family. As to quaternary structure, occurs in many kinds of cells as a complex with monomeric actin in a 1:1 ratio. Phosphorylated by MAP kinases.

It localises to the cytoplasm. Its subcellular location is the cytoskeleton. Its function is as follows. Binds to actin and affects the structure of the cytoskeleton. At high concentrations, profilin prevents the polymerization of actin, whereas it enhances it at low concentrations. The polypeptide is Profilin-8 (Zea mays (Maize)).